We begin with the raw amino-acid sequence, 229 residues long: Potassium/proton antiporter CemA (229 aa).

3 helical membrane-spanning segments follow: residues 7–27 (FTPL…SFSV), 107–127 (ILHF…SILG), and 189–209 (IISG…KYWI).

Belongs to the CemA family.

It localises to the plastid. It is found in the chloroplast inner membrane. The catalysed reaction is K(+)(in) + H(+)(out) = K(+)(out) + H(+)(in). Its function is as follows. Contributes to K(+)/H(+) antiport activity by supporting proton efflux to control proton extrusion and homeostasis in chloroplasts in a light-dependent manner to modulate photosynthesis. Prevents excessive induction of non-photochemical quenching (NPQ) under continuous-light conditions. Indirectly promotes efficient inorganic carbon uptake into chloroplasts. This is Potassium/proton antiporter CemA from Atropa belladonna (Belladonna).